A 358-amino-acid polypeptide reads, in one-letter code: tRNA-specific 2-thiouridylase MnmA (358 aa).

ATP contacts are provided by residues 22–29 (LVSGGIDS) and phenylalanine 48. Cysteine 105 acts as the Nucleophile in catalysis. A disulfide bond links cysteine 105 and cysteine 201. Glycine 129 serves as a coordination point for ATP. An interaction with tRNA region spans residues 151-153 (KEQ). Residue cysteine 201 is the Cysteine persulfide intermediate of the active site. The tract at residues 306–307 (RY) is interaction with tRNA.

Belongs to the MnmA/TRMU family.

It is found in the cytoplasm. The catalysed reaction is S-sulfanyl-L-cysteinyl-[protein] + uridine(34) in tRNA + AH2 + ATP = 2-thiouridine(34) in tRNA + L-cysteinyl-[protein] + A + AMP + diphosphate + H(+). In terms of biological role, catalyzes the 2-thiolation of uridine at the wobble position (U34) of tRNA, leading to the formation of s(2)U34. This Desulfosudis oleivorans (strain DSM 6200 / JCM 39069 / Hxd3) (Desulfococcus oleovorans) protein is tRNA-specific 2-thiouridylase MnmA.